The sequence spans 956 residues: Netrin receptor UNC5D (956 aa).

The signal sequence occupies residues 1-30 (MGTGAADRSRGARWWLPWLGLCFWAAGAEA). The Extracellular segment spans residues 31-382 (ARGADSGEVL…SRRGIENASD (352 aa)). The Ig-like domain maps to 52 to 149 (PHFIEEPEDA…LGTSKSRKAS (98 aa)). Disulfide bonds link C73/C134, C85/C132, C178/C229, C262/C299, C266/C303, C277/C289, C318/C352, C322/C357, and C330/C342. An important for interaction with FLRT2 region spans residues 89-91 (WVH). N-linked (GlcNAc...) asparagine glycans are attached at residues N115 and N226. In terms of domain architecture, Ig-like C2-type spans 164–242 (QGREVPIEGM…NIVAKRRSLS (79 aa)). TSP type-1 domains follow at residues 250–304 (NGGW…ALCP) and 306–358 (DGSW…GLCI). Residues 383-403 (IALYSGLGAAVVAVAVLVIGV) form a helical membrane-spanning segment. Topologically, residues 404-956 (TLYRRSHSDY…DFNYSRQNGL (553 aa)) are cytoplasmic. Residues 545 to 685 (LRTTGVFGHL…FGTYALTGEP (141 aa)) form the ZU5 domain. Residues 862-939 (QRICATFDTP…RTHTKLSNIT (78 aa)) form the Death domain.

It belongs to the unc-5 family. Interacts (via extracellular domain) with FLRT2 and FLRT3 (via extracellular domain); the interaction is direct. Has higher affinity for FLRT2. Identified in a complex with FLRT3 and ADGRL3; does not interact with ADGRL3 by itself. Proteolytically cleaved by caspases during apoptosis. The cleavage does not take place when the receptor is associated with netrin ligand. Its cleavage by caspases is required to induce apoptosis.

It is found in the cell membrane. Its function is as follows. Receptor for the netrin NTN4 that promotes neuronal cell survival. Plays a role in cell-cell adhesion and cell guidance. Receptor for netrin involved in cell migration. Plays a role in axon guidance by mediating axon repulsion of neuronal growth cones in the developing nervous system upon ligand binding. May play a role in apoptosis in response to DNA damage. It also acts as a dependence receptor required for apoptosis induction when not associated with netrin ligand. Mediates cell-cell adhesion via its interaction with FLRT3 on an adjacent cell. In Rattus norvegicus (Rat), this protein is Netrin receptor UNC5D.